The chain runs to 598 residues: MSLDHIRNFSIIAHIDHGKSTLADRLIQFTGALSERDMKEQVLDSMDIERERGITIKAQSVRLNYKAKDGKTYVLNLIDTPGHVDFTYEVSRSLAACEGALLIVDAAQGVEAQTMANVYLALEHDLEIIPVLNKIDLPSAEPERVREQIEEVIGLDASEAILASAKSGIGIEEILEAIVKRVPPPKGDLDAPAKALVVDSWYDNYLGVVSLARVYDGVLKAGEKIRFMGVGMDYPLDNVGFLTPVLTKVAELKAGEVGCIMAGIKKLSDARVGDTITTVRRPCASQLPGFQPAKSMVFAGLYPVDSADYEDLKDALEKLAINDASLNYEVETSPALGFGFRCGFLGMLHMEIIQERLEREFDLDLVTTAPTVVYRVKQTDGQIMDIRSPGDLPPTTKREYIEEPYILANIMVPAEYMGPVMQLCTDRRGTQKDMSYISDTRVMVQYEMPMSEVVMDFFDRLKSMTKGYASLDYHLLDYRMSDLVKLDILINGDPVDALSVIVHRNISQYRGRELAKKMKELIHRQMFDVAVQACIGGKIIARETVKALRKNVTAKCYGGDITRKRKLLEKQKAGKKRMKQVGKVEIPQEAFLAVLKVD.

A tr-type G domain is found at Asp-4–Lys-186. GTP-binding positions include Asp-16 to Thr-21 and Asn-133 to Asp-136.

The protein belongs to the TRAFAC class translation factor GTPase superfamily. Classic translation factor GTPase family. LepA subfamily.

It localises to the cell inner membrane. It catalyses the reaction GTP + H2O = GDP + phosphate + H(+). Functionally, required for accurate and efficient protein synthesis under certain stress conditions. May act as a fidelity factor of the translation reaction, by catalyzing a one-codon backward translocation of tRNAs on improperly translocated ribosomes. Back-translocation proceeds from a post-translocation (POST) complex to a pre-translocation (PRE) complex, thus giving elongation factor G a second chance to translocate the tRNAs correctly. Binds to ribosomes in a GTP-dependent manner. In Magnetococcus marinus (strain ATCC BAA-1437 / JCM 17883 / MC-1), this protein is Elongation factor 4.